The sequence spans 365 residues: Chorismate synthase (365 aa).

Arg48 is a binding site for NADP(+). FMN contacts are provided by residues 130–132, 242–243, Gly290, 305–309, and Arg331; these read RSS, NA, and KPTSS.

The protein belongs to the chorismate synthase family. As to quaternary structure, homotetramer. Requires FMNH2 as cofactor.

It carries out the reaction 5-O-(1-carboxyvinyl)-3-phosphoshikimate = chorismate + phosphate. Its pathway is metabolic intermediate biosynthesis; chorismate biosynthesis; chorismate from D-erythrose 4-phosphate and phosphoenolpyruvate: step 7/7. Catalyzes the anti-1,4-elimination of the C-3 phosphate and the C-6 proR hydrogen from 5-enolpyruvylshikimate-3-phosphate (EPSP) to yield chorismate, which is the branch point compound that serves as the starting substrate for the three terminal pathways of aromatic amino acid biosynthesis. This reaction introduces a second double bond into the aromatic ring system. This is Chorismate synthase from Erythrobacter litoralis (strain HTCC2594).